A 197-amino-acid polypeptide reads, in one-letter code: dCTP deaminase (197 aa).

DCTP is bound by residues 110–115, aspartate 128, 136–138, tyrosine 171, and glutamine 182; these read RSSLAR and VLE. The active-site Proton donor/acceptor is the glutamate 138.

It belongs to the dCTP deaminase family. Homotrimer.

It carries out the reaction dCTP + H2O + H(+) = dUTP + NH4(+). Its pathway is pyrimidine metabolism; dUMP biosynthesis; dUMP from dCTP (dUTP route): step 1/2. Catalyzes the deamination of dCTP to dUTP. The sequence is that of dCTP deaminase from Alteromonas mediterranea (strain DSM 17117 / CIP 110805 / LMG 28347 / Deep ecotype).